The sequence spans 267 residues: Meiosis-specific protein ISC10 (267 aa).

The segment covering 1–13 (MDVDERLHQDENQ) has biased composition (basic and acidic residues). The segment at 1–26 (MDVDERLHQDENQTHPFSQKKSSSFL) is disordered. The segment covering 14–25 (THPFSQKKSSSF) has biased composition (polar residues).

Functionally, indispensable for spore formation. This chain is Meiosis-specific protein ISC10 (ISC10), found in Saccharomyces cerevisiae (strain ATCC 204508 / S288c) (Baker's yeast).